Here is a 192-residue protein sequence, read N- to C-terminus: Probable GTP-binding protein EngB (192 aa).

The 171-residue stretch at 22–192 folds into the EngB-type G domain; it reads GRPEIVFVGR…LLERLDLFSQ (171 aa). Residues 30 to 37, 57 to 61, 75 to 78, 142 to 145, and 172 to 174 contribute to the GTP site; these read GRSNVGKS, GKTRL, DLPG, TKWD, and YSS. The Mg(2+) site is built by serine 37 and threonine 59.

The protein belongs to the TRAFAC class TrmE-Era-EngA-EngB-Septin-like GTPase superfamily. EngB GTPase family. Mg(2+) is required as a cofactor.

In terms of biological role, necessary for normal cell division and for the maintenance of normal septation. In Chlorobaculum parvum (strain DSM 263 / NCIMB 8327) (Chlorobium vibrioforme subsp. thiosulfatophilum), this protein is Probable GTP-binding protein EngB.